We begin with the raw amino-acid sequence, 199 residues long: NAD(P)H dehydrogenase (quinone) (199 aa).

In terms of domain architecture, Flavodoxin-like spans 4–190; the sequence is VLVLYYSTYG…AGARHQGELV (187 aa). FMN-binding positions include 10–15 and 78–80; these read STYGHL and TRF. Y12 is a binding site for NAD(+). A substrate-binding site is contributed by W98. Residues 113 to 119 and H134 each bind FMN; that span reads STATQHG.

It belongs to the WrbA family. FMN is required as a cofactor.

The enzyme catalyses a quinone + NADH + H(+) = a quinol + NAD(+). It catalyses the reaction a quinone + NADPH + H(+) = a quinol + NADP(+). This chain is NAD(P)H dehydrogenase (quinone), found in Azorhizobium caulinodans (strain ATCC 43989 / DSM 5975 / JCM 20966 / LMG 6465 / NBRC 14845 / NCIMB 13405 / ORS 571).